A 630-amino-acid polypeptide reads, in one-letter code: Replication protein A 70 kDa DNA-binding subunit B (630 aa).

Positions 200–282 (IIKVRVTSKG…KTVHNDYEMT (83 aa)) form a DNA-binding region, OB. Residues 496–516 (CKTCNKKVTEAIGSGYWCEGC) form a C4-type zinc finger.

The protein belongs to the replication factor A protein 1 family. Heterotrimer of RPA1, RPA2 and RPA3 (canonical replication protein A complex). Interacts with RPA2A. Expressed in root tips, roots, shoot apical meristem (SAM) and young leaves, and at lower levels in mature leaves, flag leaves and ears.

The protein resides in the nucleus. Its function is as follows. Component of the replication protein A complex (RPA) required for DNA recombination, repair and replication. The activity of RPA is mediated by single-stranded DNA binding and protein interactions. Probably involved in repair of double-strand DNA breaks (DSBs) induced by genotoxic stresses. The chain is Replication protein A 70 kDa DNA-binding subunit B (RPA1B) from Oryza sativa subsp. japonica (Rice).